Consider the following 435-residue polypeptide: NADH-quinone oxidoreductase subunit D 2 (435 aa).

The protein belongs to the complex I 49 kDa subunit family. NDH-1 is composed of 14 different subunits. Subunits NuoB, C, D, E, F, and G constitute the peripheral sector of the complex.

The protein localises to the cell inner membrane. The catalysed reaction is a quinone + NADH + 5 H(+)(in) = a quinol + NAD(+) + 4 H(+)(out). Its function is as follows. NDH-1 shuttles electrons from NADH, via FMN and iron-sulfur (Fe-S) centers, to quinones in the respiratory chain. The immediate electron acceptor for the enzyme in this species is believed to be ubiquinone. Couples the redox reaction to proton translocation (for every two electrons transferred, four hydrogen ions are translocated across the cytoplasmic membrane), and thus conserves the redox energy in a proton gradient. This is NADH-quinone oxidoreductase subunit D 2 from Stenotrophomonas maltophilia (strain R551-3).